Here is a 328-residue protein sequence, read N- to C-terminus: Transcription factor bHLH25 (328 aa).

The segment at 125–152 (PHQKSDEFNRKGTKRAQPFSRNQSNAQD) is disordered. Positions 148–197 (SNAQDHIIAERKRREKLTQRFVALSALVPGLKKMDKASVLGDALKHIKYL) constitute a bHLH domain.

Homodimer. In terms of tissue distribution, expressed in flowers.

It localises to the nucleus. The chain is Transcription factor bHLH25 (BHLH25) from Arabidopsis thaliana (Mouse-ear cress).